A 3744-amino-acid chain; its full sequence is SAGA complex/NuA4 acetyltransferase complex subunit TRA1 (3744 aa).

The residue at position 2 (Ser-2) is an N-acetylserine. HEAT repeat units follow at residues 2–40 (SLTEQIEQFASRFRDDDATLQSRYSTLSELYDIMELLNS), 46–92 (FFLQ…NQTF), 94–131 (PYAMEVLEFLLSVLPKENEENGILCMKVLTTLFKSFKS), and 135–172 (DKLDSFIRIIIQIYKNTPNLINQTFYEAGKAEQGDLDS). Residues 2-2598 (SLTEQIEQFA…KPYHTRQISS (2597 aa)) are HEAT. Ser-172 is modified (phosphoserine). Positions 185 to 195 (FSKNDEEKDFP) are enriched in basic and acidic residues. The disordered stretch occupies residues 185 to 212 (FSKNDEEKDFPSKQSSTEPRFENSTSSN). The segment covering 196–212 (SKQSSTEPRFENSTSSN) has biased composition (polar residues). 3 HEAT repeats span residues 247–284 (PEFTPLIMNLLNIQIKQQQEAREQAESRGEHFTSISTE), 319–357 (QDYVNFVPDLIIRLLQDCPSELSSARKELLHATRHILST), and 437–477 (KLLL…RFKT). A compositionally biased stretch (basic and acidic residues) spans 522-539 (LEPSDDDHLMPQPKKEDI). Residues 522 to 546 (LEPSDDDHLMPQPKKEDINDSPDVE) are disordered. Ser-542 is modified (phosphoserine). HEAT repeat units follow at residues 588–628 (RTLM…VFSY), 734–771 (PNFAGILLRFLKGKLKDLGNVDFNTSNVLIRLFKLSFM), 779–821 (INEV…SIGG), 829–867 (RSIKPILQVLLQSLNQMILTARLPHERELYVELCITVPV), 870–910 (SVLA…NLTA), 919–958 (PVIDDVSKALFNLLQPQPFNHAISHNVVRILGKLGGRNRQ), 1074–1112 (NQENLFLRLLESVFYATSIKELKDDAMDLLNNLLDHFCL), 1188–1225 (SFIPELAKQFIHLCYDETYYNKRGGVLGIKVLIDNVKS), 1283–1320 (KVLENTLTDIVCELSNANPKVRNACQKSLHTISNLTGI), 1369–1408 (TFNEELFRLLQESIVLADAEDESLSTNIQKTTEYSTSEQL), 1435–1472 (NIRIRILAVFFKTMLKTSPEIINTTYEALKGSLAENSK), 1476–1512 (ELLQNGLKPLLMNLSDHQKLTVPGLDALSKLLELLIA), 1693–1734 (LKLK…RFTE), 1739–1776 (DQNPLLLDFIDFSFSNGIKASYSLKKFIFHNIIASSNK), 1918–1955 (FPIKVVTQVFVALLRSSHVEARYLVKQSLDVLTPVLHE), 2115–2155 (ELGL…LDSE), 2182–2219 (ENLPTIQNLLEKCIKSDHHDVQEALQKVLQVIMKAIKA), 2230–2267 (SPGKTFIQMLTSVITQDLQETSSVTAGVTLAWVLFMNF), 2269–2307 (DNIVPLLTPLMKTFSKLCKDHLSISQPKDAMALEEARIT), and 2536–2573 (IISSDFIDSLIEIFYQDPKAIHRAWVTLFPQVYKSIPK). The segment at 2599–3744 (RTNVINMLLD…RTDVNFMPWF (1146 aa)) is head. An FAT domain is found at 2622 to 3177 (LVKYLAISYN…HFQLRTTKED (556 aa)). Residues 3374-3732 (FLPTVDFVRG…CIGSAVSPRN (359 aa)) enclose the PI3K/PI4K catalytic domain. Residues 3380–3386 (FVRGTHS) form a G-loop region. Positions 3563–3571 (MINNRTPHK) are catalytic loop. The activation loop stretch occupies residues 3600–3625 (LKNHDLSLPPDSPIFHNNEPVPFRLT). The 33-residue stretch at 3712–3744 (TPTVTTQFILDCIGSAVSPRNLARTDVNFMPWF) folds into the FATC domain.

The protein belongs to the PI3/PI4-kinase family. TRA1 subfamily. As to quaternary structure, component of the 1.8 MDa SAGA (Spt-Ada-Gcn5 acetyltransferase) complex, which is composed of 19 subunits TRA1, SPT7, TAF5, NGG1/ADA3, SGF73, SPT20/ADA5, SPT8, TAF12, TAF6, HFI1/ADA1, UBP8, GCN5, ADA2, SPT3, SGF29, TAF10, TAF9, SGF11 and SUS1. The SAGA complex is composed of 4 modules, namely the HAT (histone acetyltransferase) module (GCN5, ADA2, NGG1/ADA3 and SGF29), the DUB (deubiquitinating) module (UBP8, SGF11, SGF73 and SUS1), the core or TAF (TBP-associated factor) module (TAF5, TAF6, TAF9, TAF10 and TAF12), and the Tra1 or SPT (Suppressor of Ty) module (TRA1, HFI1/ADA1, SPT3, SPT7, SPT8 and SPT20/ADA5). The Tra1/SPT module binds activators, the core module recruits TBP (TATA-binding protein), the HAT module contains the histone H3 acetyltransferase GCN5, and the DUB module comprises the histone H2B deubiquitinase UBP8. Also identified in an altered form of SAGA, named SALSA (SAGA altered, Spt8 absent) or SLIK (SAGA-like) complex, which contains a C-terminal truncated form of SPT7 and is missing SPT8. However, it has been shown that the SAGA and SAGA-like SALSA/SLIK transcriptional coactivators are structurally and biochemically equivalent. Component of the NuA4 acetyltransferase complex, which consists of the catalytic subunit ESA1 and the 12 non-catalytic subunits ACT1, ARP4, EAF1/VID21, SWC4/EAF2, EAF3, EAF5, EAF6, EAF7, EPL1, TRA1, YAF9 and YNG2. TRA1 is the scaffold subunit for binding to a variety of transcription activators or transcription factors to recruit NuA4 for targeted gene activation. Identified in the Ada.spt complex with NGG1/ADA3 and SPT7.

Its subcellular location is the nucleus. Its function is as follows. Essential scaffold subunit of the transcription coactivator SAGA complex. SAGA acts as a general cofactor required for essentially all RNA polymerase II transcription. At the promoters, SAGA is required for transcription pre-initiation complex (PIC) recruitment. It influences RNA polymerase II transcriptional activity through different activities such as TBP interaction (via core/TAF module) and promoter selectivity, interaction with transcription activators (via Tra1/SPT module), and chromatin modification through histone acetylation (via HAT module) and deubiquitination (via DUB module). SAGA preferentially acetylates histones H3 (to form H3K9ac, H3K14ac, H3K18ac and H3K23ac) and H2B and deubiquitinates histone H2B. SAGA interacts with DNA via upstream activating sequences (UASs). Also identified in a modified version of SAGA named SALSA or SLIK. The cleavage of SPT7 and the absence of the SPT8 subunit in SLIK neither drive any major conformational differences in its structure compared with SAGA, nor significantly affect HAT, DUB, or DNA-binding activities. Component of the NuA4 histone H4/H2A acetyltransferase involved in transcription and DNA repair. This chain is SAGA complex/NuA4 acetyltransferase complex subunit TRA1, found in Saccharomyces cerevisiae (strain ATCC 204508 / S288c) (Baker's yeast).